Consider the following 94-residue polypeptide: Large ribosomal subunit protein bL25 (94 aa).

It belongs to the bacterial ribosomal protein bL25 family. In terms of assembly, part of the 50S ribosomal subunit; part of the 5S rRNA/L5/L18/L25 subcomplex. Contacts the 5S rRNA. Binds to the 5S rRNA independently of L5 and L18.

This is one of the proteins that binds to the 5S RNA in the ribosome where it forms part of the central protuberance. This is Large ribosomal subunit protein bL25 from Salmonella agona (strain SL483).